The chain runs to 115 residues: Phosphoribosyl-AMP cyclohydrolase (115 aa).

Aspartate 80 is a Mg(2+) binding site. Residue cysteine 81 participates in Zn(2+) binding. Mg(2+) is bound by residues aspartate 82 and aspartate 84. 2 residues coordinate Zn(2+): cysteine 97 and cysteine 104.

This sequence belongs to the PRA-CH family. As to quaternary structure, homodimer. The cofactor is Mg(2+). Requires Zn(2+) as cofactor.

The protein resides in the cytoplasm. The catalysed reaction is 1-(5-phospho-beta-D-ribosyl)-5'-AMP + H2O = 1-(5-phospho-beta-D-ribosyl)-5-[(5-phospho-beta-D-ribosylamino)methylideneamino]imidazole-4-carboxamide. It participates in amino-acid biosynthesis; L-histidine biosynthesis; L-histidine from 5-phospho-alpha-D-ribose 1-diphosphate: step 3/9. Catalyzes the hydrolysis of the adenine ring of phosphoribosyl-AMP. This Mycobacterium leprae (strain Br4923) protein is Phosphoribosyl-AMP cyclohydrolase.